A 187-amino-acid polypeptide reads, in one-letter code: Pterin-4-alpha-carbinolamine dehydratase 2, mitochondrial (187 aa).

A mitochondrion-targeting transit peptide spans methionine 1–phenylalanine 33.

This sequence belongs to the pterin-4-alpha-carbinolamine dehydratase family.

Its subcellular location is the mitochondrion. The catalysed reaction is (4aS,6R)-4a-hydroxy-L-erythro-5,6,7,8-tetrahydrobiopterin = (6R)-L-erythro-6,7-dihydrobiopterin + H2O. Functionally, involved in tetrahydrobiopterin biosynthesis. Possesses pterin-4-alpha-carbinolamine dehydratase activity when expressed in a bacterial heterolgous system. The polypeptide is Pterin-4-alpha-carbinolamine dehydratase 2, mitochondrial (Arabidopsis thaliana (Mouse-ear cress)).